The primary structure comprises 361 residues: Phospho-N-acetylmuramoyl-pentapeptide-transferase (361 aa).

A run of 10 helical transmembrane segments spans residues 28–48, 73–93, 97–117, 134–154, 168–188, 200–220, 237–257, 264–284, 289–309, and 338–358; these read LAAL…IRSL, TMGG…WADL, YIWV…VDDY, FFWQ…TADL, VAIP…IVGT, GLAI…AYVA, AGEL…FLWF, VFMG…ITVI, IVLV…MIQV, and QVVV…LSTL.

This sequence belongs to the glycosyltransferase 4 family. MraY subfamily. The cofactor is Mg(2+).

Its subcellular location is the cell inner membrane. It carries out the reaction UDP-N-acetyl-alpha-D-muramoyl-L-alanyl-gamma-D-glutamyl-meso-2,6-diaminopimeloyl-D-alanyl-D-alanine + di-trans,octa-cis-undecaprenyl phosphate = di-trans,octa-cis-undecaprenyl diphospho-N-acetyl-alpha-D-muramoyl-L-alanyl-D-glutamyl-meso-2,6-diaminopimeloyl-D-alanyl-D-alanine + UMP. The protein operates within cell wall biogenesis; peptidoglycan biosynthesis. Its function is as follows. Catalyzes the initial step of the lipid cycle reactions in the biosynthesis of the cell wall peptidoglycan: transfers peptidoglycan precursor phospho-MurNAc-pentapeptide from UDP-MurNAc-pentapeptide onto the lipid carrier undecaprenyl phosphate, yielding undecaprenyl-pyrophosphoryl-MurNAc-pentapeptide, known as lipid I. The polypeptide is Phospho-N-acetylmuramoyl-pentapeptide-transferase (Nitrosomonas europaea (strain ATCC 19718 / CIP 103999 / KCTC 2705 / NBRC 14298)).